Here is a 132-residue protein sequence, read N- to C-terminus: MNNDAISTTVTSIRNANTKRKAMTRIPVTKMTRGIVQILLEEGFLKSVTEHTEGGKIFMDVKLRYFGKEKKPYVATIRYISKPGLRIYCDHIRIPKILGGMGIAILSTSYGLITDREARRRKTGGEILCHIW.

Belongs to the universal ribosomal protein uS8 family. As to quaternary structure, part of the 30S ribosomal subunit.

Its subcellular location is the plastid. It localises to the chloroplast. In terms of biological role, one of the primary rRNA binding proteins, it binds directly to 16S rRNA central domain where it helps coordinate assembly of the platform of the 30S subunit. This is Small ribosomal subunit protein uS8c (rps8) from Adiantum capillus-veneris (Maidenhair fern).